The sequence spans 295 residues: UDP-N-acetylenolpyruvoylglucosamine reductase (295 aa).

The region spanning 24–188 (KVGGDAEIFF…LKAVFKVNKG (165 aa)) is the FAD-binding PCMH-type domain. Arg-168 is a catalytic residue. Catalysis depends on Ser-217, which acts as the Proton donor. Glu-287 is a catalytic residue.

This sequence belongs to the MurB family. FAD serves as cofactor.

The protein resides in the cytoplasm. It catalyses the reaction UDP-N-acetyl-alpha-D-muramate + NADP(+) = UDP-N-acetyl-3-O-(1-carboxyvinyl)-alpha-D-glucosamine + NADPH + H(+). It participates in cell wall biogenesis; peptidoglycan biosynthesis. In terms of biological role, cell wall formation. This Rickettsia akari (strain Hartford) protein is UDP-N-acetylenolpyruvoylglucosamine reductase.